Reading from the N-terminus, the 303-residue chain is N-acetylmuramic acid 6-phosphate etherase (303 aa).

The tract at residues 1–21 is disordered; sequence MQPSQLRSLTTESRNPNTMGI. Residues 58 to 221 form the SIS domain; sequence AYDSISNGGR…STSVMIRQGK (164 aa). Catalysis depends on E86, which acts as the Proton donor. E117 is a catalytic residue.

It belongs to the GCKR-like family. MurNAc-6-P etherase subfamily. As to quaternary structure, homodimer.

The catalysed reaction is N-acetyl-D-muramate 6-phosphate + H2O = N-acetyl-D-glucosamine 6-phosphate + (R)-lactate. It functions in the pathway amino-sugar metabolism; N-acetylmuramate degradation. In terms of biological role, specifically catalyzes the cleavage of the D-lactyl ether substituent of MurNAc 6-phosphate, producing GlcNAc 6-phosphate and D-lactate. This Bacillus pumilus (strain SAFR-032) protein is N-acetylmuramic acid 6-phosphate etherase.